Reading from the N-terminus, the 505-residue chain is DDB1- and CUL4-associated factor 17 (505 aa).

Helical transmembrane passes span 186-206 (VLLYLAVFRVLPFSLVGILEI) and 222-242 (GILIVMYSSGLVRLYSFQAII).

In terms of assembly, interacts with DDB1, CUL4A and CUL4B.

It is found in the membrane. The protein resides in the nucleus. It localises to the nucleolus. Its pathway is protein modification; protein ubiquitination. Functionally, may function as a substrate receptor for CUL4-DDB1 E3 ubiquitin-protein ligase complex. This Rattus norvegicus (Rat) protein is DDB1- and CUL4-associated factor 17 (Dcaf17).